A 281-amino-acid polypeptide reads, in one-letter code: Ribose-phosphate pyrophosphokinase (281 aa).

ATP is bound by residues 33 to 35 and 90 to 91; these read DGE and RQ. Mg(2+) is bound by residues His-123 and Asp-161. Lys-185 is a catalytic residue. Arg-187 and Asp-211 together coordinate D-ribose 5-phosphate.

Belongs to the ribose-phosphate pyrophosphokinase family. Class III (archaeal) subfamily. Mg(2+) is required as a cofactor.

The protein resides in the cytoplasm. It carries out the reaction D-ribose 5-phosphate + ATP = 5-phospho-alpha-D-ribose 1-diphosphate + AMP + H(+). Its pathway is metabolic intermediate biosynthesis; 5-phospho-alpha-D-ribose 1-diphosphate biosynthesis; 5-phospho-alpha-D-ribose 1-diphosphate from D-ribose 5-phosphate (route I): step 1/1. In terms of biological role, involved in the biosynthesis of the central metabolite phospho-alpha-D-ribosyl-1-pyrophosphate (PRPP) via the transfer of pyrophosphoryl group from ATP to 1-hydroxyl of ribose-5-phosphate (Rib-5-P). The protein is Ribose-phosphate pyrophosphokinase of Halobacterium salinarum (strain ATCC 29341 / DSM 671 / R1).